An 828-amino-acid polypeptide reads, in one-letter code: MTRSPLHRLIFGGLRRLLYLWVRSETINQSSMTLNLDRSRPVFYALPSPALTDLAVLDHECTKAGLPRPVLPVAVGPLQEPAAFFYLTPDPDWLGRQDKSGAPPTLERLVAAVSQHAEEDAQIIPVSVFWGQTPASESSPWKLLFADSWAVTGRLRRLLTVLILGRKTRVQFSAPIHLRELVQHNKGHERTVRMAQRLMRVHFRNLKTAVIGPDISHRRTLVKGLVHAPQVRQAIADEAQRENLPLAKAEAQALRYGNEIASDYTYTAIRFLEVVLSWFWNKIYDGIKVNHIEQVQGIAPGHEVIYVPCHRSHIDYLLLSYLLFRNGLTPPHVAAGINLNMPVVGNLLRRGGAFFMRRTFKGNPLYTAVFNEYLHTLYTKGFPVEYFVEGGRSRTGRMLQPRTGMLAITLRSFLRSSRTPIVFVPVYIGYERVLEGRTYLGELRGASKKKESVLDIFKVFGALKQRFGQVYVNFGEPIRLAGFLDQQQPGWREQDHGPQYRPEWLNATTARLGETVARHLNEAAAINPVNLVALALLSTSRLALDERALTRVLDLYLALLRQVPYSPHTTLPEGDGQALIEHVRSMNLVAEQKDALGRILYLDEGNAVLMTYYRNNVLHIFALPALLASFFLSSSRMSRQLLGQYVHALYPYLQAELFLRWTPEQLDEVIDQWLVALVEQGLLRQDNDLYVRPAPSSRQFVLLTLLARTITQTLQRFYMATSLLINSGQNSLSAEALEDLCVMMAQRLSILHGLNAPEFFDKTLFRHFIQTLLQQGVLHADAQGKLSYHDKLGELAEGVAKRVLSAELRLSIRQVALHRDDGLETSTL.

The HXXXXD motif signature appears at 310–315; sequence HRSHID.

Belongs to the GPAT/DAPAT family.

Its subcellular location is the cell inner membrane. The catalysed reaction is sn-glycerol 3-phosphate + an acyl-CoA = a 1-acyl-sn-glycero-3-phosphate + CoA. The protein operates within phospholipid metabolism; CDP-diacylglycerol biosynthesis; CDP-diacylglycerol from sn-glycerol 3-phosphate: step 1/3. The sequence is that of Glycerol-3-phosphate acyltransferase from Pseudomonas putida (strain ATCC 47054 / DSM 6125 / CFBP 8728 / NCIMB 11950 / KT2440).